The primary structure comprises 696 residues: Polyribonucleotide nucleotidyltransferase (696 aa).

Mg(2+)-binding residues include Asp489 and Asp495. The KH domain occupies 556 to 615 (PQYVTMKINPEKIRDVIGKGGVVIREITEATNCAIDISDDGTIKIAAHTTEEGEAAKRRI). Residues 625–693 (GKVYEGTVVK…RQGRVRLSMK (69 aa)) enclose the S1 motif domain.

This sequence belongs to the polyribonucleotide nucleotidyltransferase family. As to quaternary structure, component of the RNA degradosome, which is a multiprotein complex involved in RNA processing and mRNA degradation. The cofactor is Mg(2+).

The protein resides in the cytoplasm. The enzyme catalyses RNA(n+1) + phosphate = RNA(n) + a ribonucleoside 5'-diphosphate. Functionally, involved in mRNA degradation. Catalyzes the phosphorolysis of single-stranded polyribonucleotides processively in the 3'- to 5'-direction. This Coxiella burnetii (strain CbuG_Q212) (Coxiella burnetii (strain Q212)) protein is Polyribonucleotide nucleotidyltransferase.